Here is a 108-residue protein sequence, read N- to C-terminus: Flagellar hook-basal body complex protein FliE (108 aa).

This sequence belongs to the FliE family.

The protein resides in the bacterial flagellum basal body. This is Flagellar hook-basal body complex protein FliE from Pseudomonas fluorescens (strain ATCC BAA-477 / NRRL B-23932 / Pf-5).